The primary structure comprises 102 residues: Integration host factor subunit alpha (102 aa).

It belongs to the bacterial histone-like protein family. As to quaternary structure, heterodimer of an alpha and a beta chain.

Its function is as follows. This protein is one of the two subunits of integration host factor, a specific DNA-binding protein that functions in genetic recombination as well as in transcriptional and translational control. The sequence is that of Integration host factor subunit alpha from Paracoccus denitrificans (strain Pd 1222).